The following is a 508-amino-acid chain: Photosystem II CP47 reaction center protein (508 aa).

A run of 6 helical transmembrane segments spans residues 21 to 36 (AVHL…WAGS), 101 to 115 (ITLS…IWHW), 140 to 156 (GIHL…FGAF), 203 to 218 (IAAG…FHLS), 237 to 252 (VLSS…AFVV), and 457 to 472 (TFAL…HGAR).

Belongs to the PsbB/PsbC family. PsbB subfamily. PSII is composed of 1 copy each of membrane proteins PsbA, PsbB, PsbC, PsbD, PsbE, PsbF, PsbH, PsbI, PsbJ, PsbK, PsbL, PsbM, PsbT, PsbX, PsbY, PsbZ, Psb30/Ycf12, at least 3 peripheral proteins of the oxygen-evolving complex and a large number of cofactors. It forms dimeric complexes. It depends on Binds multiple chlorophylls. PSII binds additional chlorophylls, carotenoids and specific lipids. as a cofactor.

Its subcellular location is the plastid. It is found in the chloroplast thylakoid membrane. Functionally, one of the components of the core complex of photosystem II (PSII). It binds chlorophyll and helps catalyze the primary light-induced photochemical processes of PSII. PSII is a light-driven water:plastoquinone oxidoreductase, using light energy to abstract electrons from H(2)O, generating O(2) and a proton gradient subsequently used for ATP formation. This Psilotum nudum (Whisk fern) protein is Photosystem II CP47 reaction center protein.